Reading from the N-terminus, the 287-residue chain is ADP-dependent (S)-NAD(P)H-hydrate dehydratase (287 aa).

The 277-residue stretch at 7 to 283 (GEDDVRKFVP…ELLPSVMKPF (277 aa)) folds into the YjeF C-terminal domain. 2 residues coordinate (6S)-NADPHX: Ala-42 and His-159. AMP-binding positions include 196–200 (KGPTD) and Gly-224. Asp-225 lines the (6S)-NADPHX pocket.

The protein belongs to the NnrD/CARKD family. As to quaternary structure, homotetramer. Mg(2+) is required as a cofactor.

It carries out the reaction (6S)-NADHX + ADP = AMP + phosphate + NADH + H(+). It catalyses the reaction (6S)-NADPHX + ADP = AMP + phosphate + NADPH + H(+). Functionally, catalyzes the dehydration of the S-form of NAD(P)HX at the expense of ADP, which is converted to AMP. Together with NAD(P)HX epimerase, which catalyzes the epimerization of the S- and R-forms, the enzyme allows the repair of both epimers of NAD(P)HX, a damaged form of NAD(P)H that is a result of enzymatic or heat-dependent hydration. The protein is ADP-dependent (S)-NAD(P)H-hydrate dehydratase of Cenarchaeum symbiosum (strain A).